Reading from the N-terminus, the 908-residue chain is Metabotropic glutamate receptor 8 (908 aa).

The N-terminal stretch at 1–33 (MVCEGKRSASCPCFFLLTAKFYWILTMMQRTHS) is a signal peptide. At 34 to 583 (QEYAHSIRVD…IIKLEWHSPW (550 aa)) the chain is on the extracellular side. A disulfide bridge links Cys64 with Cys106. Residue Asn95 is glycosylated (N-linked (GlcNAc...) asparagine). Residues Ser156, 177–179 (AST), and Tyr227 contribute to the L-glutamate site. 7 cysteine pairs are disulfide-bonded: Cys246–Cys534, Cys369–Cys384, Cys424–Cys431, Cys516–Cys535, Cys520–Cys538, Cys541–Cys553, and Cys556–Cys569. Residue Asn298 is glycosylated (N-linked (GlcNAc...) asparagine). Position 309 (Asp309) interacts with L-glutamate. Residue Lys401 participates in L-glutamate binding. Asn452 and Asn480 each carry an N-linked (GlcNAc...) asparagine glycan. Residue Asn565 is glycosylated (N-linked (GlcNAc...) asparagine). Residues 584-608 (AVVPVFVAILGIIATTFVIVTFVRY) traverse the membrane as a helical segment. Topologically, residues 609-620 (NDTPIVRASGRE) are cytoplasmic. A helical membrane pass occupies residues 621-641 (LSYVLLTGIFLCYSITFLMIA). Over 642–647 (APDTII) the chain is Extracellular. Residues 648–668 (CSFRRVFLGLGMCFSYAALLT) traverse the membrane as a helical segment. Residues 669–695 (KTNRIHRIFEQGKKSVTAPKFISPASQ) are Cytoplasmic-facing. Residues 696 to 716 (LVITFSLISVQLLGVFVWFVV) traverse the membrane as a helical segment. Residues 717–746 (DPPHIIIDYGEQRTLDPEKARGVLKCDISD) are Extracellular-facing. The helical transmembrane segment at 747–768 (LSLICSLGYSILLMVTCTVYAI) threads the bilayer. Topologically, residues 769-781 (KTRGVPETFNEAK) are cytoplasmic. The helical transmembrane segment at 782-803 (PIGFTMYTTCIIWLAFIPIFFG) threads the bilayer. Residues 804–818 (TAQSAEKMYIQTTTL) lie on the Extracellular side of the membrane. A helical transmembrane segment spans residues 819 to 843 (TVSMSLSASVSLGMLYMPKVYIIIF). At 844–908 (HPEQNVQKRK…TYISYSNHSI (65 aa)) the chain is on the cytoplasmic side. Lys882 participates in a covalent cross-link: Glycyl lysine isopeptide (Lys-Gly) (interchain with G-Cter in SUMO1).

It belongs to the G-protein coupled receptor 3 family. Interacts with PICK1.

The protein resides in the cell membrane. Functionally, G-protein coupled receptor for glutamate. Ligand binding causes a conformation change that triggers signaling via guanine nucleotide-binding proteins (G proteins) and modulates the activity of down-stream effectors, such as adenylate cyclase. Signaling inhibits adenylate cyclase activity. The protein is Metabotropic glutamate receptor 8 (GRM8) of Homo sapiens (Human).